A 209-amino-acid chain; its full sequence is Uridine kinase (209 aa).

Residue 16-23 (GGSGSGKT) coordinates ATP.

It belongs to the uridine kinase family.

Its subcellular location is the cytoplasm. The enzyme catalyses uridine + ATP = UMP + ADP + H(+). It carries out the reaction cytidine + ATP = CMP + ADP + H(+). It participates in pyrimidine metabolism; CTP biosynthesis via salvage pathway; CTP from cytidine: step 1/3. It functions in the pathway pyrimidine metabolism; UMP biosynthesis via salvage pathway; UMP from uridine: step 1/1. The chain is Uridine kinase from Lactiplantibacillus plantarum (strain ATCC BAA-793 / NCIMB 8826 / WCFS1) (Lactobacillus plantarum).